The sequence spans 581 residues: AP2-like ethylene-responsive transcription factor AIL6 (581 aa).

Disordered stretches follow at residues 105–132 (VRYS…HHNQ) and 205–240 (NNTN…TDSE). Low complexity-rich tracts occupy residues 108-122 (SDNS…SLTQ) and 218-232 (RGNN…NNNN). DNA-binding regions (AP2/ERF) lie at residues 268-331 (IYRG…TNFP) and 367-425 (IYRG…TNFE).

The protein belongs to the AP2/ERF transcription factor family. AP2 subfamily. As to expression, expressed in roots, seedlings, hypocotyl, inflorescence, siliques, and pistils. Also detected at low levels in leaves.

The protein localises to the nucleus. Probably acts as a transcriptional activator. Binds to the GCC-box pathogenesis-related promoter element. May be involved in the regulation of gene expression by stress factors and by components of stress signal transduction pathways. In Arabidopsis thaliana (Mouse-ear cress), this protein is AP2-like ethylene-responsive transcription factor AIL6.